Here is a 720-residue protein sequence, read N- to C-terminus: Inactive serine protease PAMR1 (720 aa).

Residues 1 to 21 (MELGWWPQLGLAFLQLLLISS) form the signal peptide. 8 cysteine pairs are disulfide-bonded: Cys-128/Cys-150, Cys-177/Cys-199, Cys-239/Cys-250, Cys-244/Cys-260, Cys-262/Cys-271, Cys-280/Cys-329, Cys-315/Cys-342, and Cys-414/Cys-442. The region spanning 128-236 (CGQVLRVPKG…DGFHAIFEEI (109 aa)) is the CUB domain. Residues 235-272 (EITACSSSPCFHDGTCLLDSTGSYKCACLAGYTGKHCE) enclose the EGF-like domain. 2 Sushi domains span residues 278-344 (RNCS…ICIK) and 387-444 (APTK…SCIP). Residues 445-720 (ICGKTENVSA…FKDWIERNMK (276 aa)) enclose the Peptidase S1 domain. Asn-451 carries an N-linked (GlcNAc...) asparagine glycan. 3 disulfide bridges follow: Cys-489/Cys-505, Cys-630/Cys-649, and Cys-661/Cys-697.

This sequence belongs to the peptidase S1 family.

The protein resides in the secreted. Its function is as follows. May play a role in regeneration of skeletal muscle. The chain is Inactive serine protease PAMR1 (PAMR1) from Bos taurus (Bovine).